We begin with the raw amino-acid sequence, 320 residues long: Putative thiosulfate sulfurtransferase (320 aa).

The N-terminal stretch at 1–37 (MSVRSLRWPRQKAFLAVISLVVAVLLAVPGWLTPATA) is a signal peptide. 2 consecutive Rhodanese domains span residues 56–166 (NNKQ…PVTK) and 194–315 (LTGK…PVET). Cys-274 serves as the catalytic Cysteine persulfide intermediate.

The protein resides in the periplasm. The enzyme catalyses thiosulfate + hydrogen cyanide = thiocyanate + sulfite + 2 H(+). Functionally, may be a sulfotransferase involved in the transport of sulfate. Displays very low rhodanese activity. This is Putative thiosulfate sulfurtransferase (rhdA) from Synechococcus elongatus (strain ATCC 33912 / PCC 7942 / FACHB-805) (Anacystis nidulans R2).